Consider the following 266-residue polypeptide: Glucosamine-6-phosphate deaminase (266 aa).

Catalysis depends on Asp-72, which acts as the Proton acceptor; for enolization step. Catalysis depends on Asp-141, which acts as the For ring-opening step. The active-site Proton acceptor; for ring-opening step is His-143. The active-site For ring-opening step is the Glu-148.

This sequence belongs to the glucosamine/galactosamine-6-phosphate isomerase family. NagB subfamily. Homohexamer.

The catalysed reaction is alpha-D-glucosamine 6-phosphate + H2O = beta-D-fructose 6-phosphate + NH4(+). It functions in the pathway amino-sugar metabolism; N-acetylneuraminate degradation; D-fructose 6-phosphate from N-acetylneuraminate: step 5/5. With respect to regulation, allosterically activated by N-acetylglucosamine 6-phosphate (GlcNAc6P). In terms of biological role, catalyzes the reversible isomerization-deamination of glucosamine 6-phosphate (GlcN6P) to form fructose 6-phosphate (Fru6P) and ammonium ion. This is Glucosamine-6-phosphate deaminase from Klebsiella pneumoniae (strain 342).